The sequence spans 254 residues: MRILLTNDDGIHAPGMAVLERIARALSDDITIVAPNSERSGAGRSLTLTRPLRLRQLGEKRFAVAGTPTDAVMMALARVMKDAPPELILSGVNRGANLGEDVSYSGTVSAAMEGALAGIPSIALSQVYAREGAGLNVSFAAAEAWGAKVLRPLLDAPWAPRSLYNVNFPAREPEQVLGIRVVPQGLRDYGQTEILQRTDPRGFDYYWIKLAGMPSTPAHSTDLEAAADGWVTVTPLHCDMTNHAALAATTALYR.

A divalent metal cation contacts are provided by Asp-8, Asp-9, Ser-40, and Asn-93.

This sequence belongs to the SurE nucleotidase family. It depends on a divalent metal cation as a cofactor.

It localises to the cytoplasm. The catalysed reaction is a ribonucleoside 5'-phosphate + H2O = a ribonucleoside + phosphate. In terms of biological role, nucleotidase that shows phosphatase activity on nucleoside 5'-monophosphates. The chain is 5'-nucleotidase SurE from Rhizorhabdus wittichii (strain DSM 6014 / CCUG 31198 / JCM 15750 / NBRC 105917 / EY 4224 / RW1) (Sphingomonas wittichii).